Here is a 390-residue protein sequence, read N- to C-terminus: GLH-binding kinase 1 (390 aa).

A Protein kinase domain is found at 38 to 338 (YVNLSFLNAG…VEDALNHPYV (301 aa)). ATP contacts are provided by residues 44 to 52 (LNAGAQGTV) and lysine 67. The Proton acceptor role is filled by aspartate 164. Serine 198 carries the post-translational modification Phosphoserine. A Phosphotyrosine modification is found at tyrosine 200.

This sequence belongs to the protein kinase superfamily. CMGC Ser/Thr protein kinase family. MAP kinase subfamily. As to quaternary structure, interacts with glh-1, glh-2 (via C-terminus), glh-3 (via C-terminus) and glh-4 (via C-terminus). Interacts with csn-5; the interaction may prevent glh-1 degradation induced by kgb-1. Interacts with fos-1. The cofactor is Mg(2+). In terms of processing, may be phosphorylated by mek-1 on Ser-198 and/or Tyr-200. Phosphorylation is induced upon Cu(2+) and arsenite-mediated cell stimulation and by fasting. As to expression, expressed in somatic and germline tissues.

Its subcellular location is the cytoplasm. The enzyme catalyses L-seryl-[protein] + ATP = O-phospho-L-seryl-[protein] + ADP + H(+). It carries out the reaction L-threonyl-[protein] + ATP = O-phospho-L-threonyl-[protein] + ADP + H(+). Activated by mek-1 mediated phosphorylation. No differences in basal activation between larvae and adults. Inhibited by phosphatase vhp-1. Functionally, mitogen-activated protein kinase which is an essential component of the JNK pathway composed of mlk-1, mek-1 and kgb-1. Phosphorylates the transcription factor fos-1 which prevents fos-1 dimerization and promoter binding and results in activation of target genes including F53A9.2/kreg-1 and lys-3/kreg-2. Phosphorylates jun-1 and activates the AP-1 transcription factor which is a heterodimer of jun-1 and fos-1. Phosphorylates glh-1 in vitro which may play a role in controlling glh-1 protein levels in the germline by targeting it for degradation by the proteasome. Required for oogenesis and probably also for spermatogenesis. Involved in the response to environmental stress such as heavy metals, infection and protein folding stress in an age-dependent manner. In larvae, has a protective role which becomes detrimental in adults. May control susceptibility to infection, heavy metal stress and premature lethality by regulating daf-16 cellular localization. Involved in the transcriptional response to bacterial pore-forming toxins and to fasting. Required for fasting-induced longevity. Involved in axon regeneration after injury downstream of tyrosine receptor svh-2. This chain is GLH-binding kinase 1, found in Caenorhabditis elegans.